A 256-amino-acid polypeptide reads, in one-letter code: Homeobox-leucine zipper protein HOX28 (256 aa).

The segment at A56–D86 is disordered. Residues S58–S67 show a composition bias toward low complexity. A DNA-binding region (homeobox) is located at residues G91–Q150. The leucine-zipper stretch occupies residues K149–P193.

It belongs to the HD-ZIP homeobox family. Class II subfamily. As to expression, expressed in seedlings, roots, stems and panicles.

The protein resides in the nucleus. In terms of biological role, probable transcription factor. The polypeptide is Homeobox-leucine zipper protein HOX28 (HOX28) (Oryza sativa subsp. indica (Rice)).